Here is a 901-residue protein sequence, read N- to C-terminus: Protein translocase subunit SecA (901 aa).

Residues Gln87, Gly105–Thr109, and Asp512 each bind ATP. Zn(2+) is bound by residues Cys885, Cys887, Cys896, and His897.

It belongs to the SecA family. As to quaternary structure, monomer and homodimer. Part of the essential Sec protein translocation apparatus which comprises SecA, SecYEG and auxiliary proteins SecDF-YajC and YidC. The cofactor is Zn(2+).

Its subcellular location is the cell inner membrane. The protein resides in the cytoplasm. It carries out the reaction ATP + H2O + cellular proteinSide 1 = ADP + phosphate + cellular proteinSide 2.. Part of the Sec protein translocase complex. Interacts with the SecYEG preprotein conducting channel. Has a central role in coupling the hydrolysis of ATP to the transfer of proteins into and across the cell membrane, serving both as a receptor for the preprotein-SecB complex and as an ATP-driven molecular motor driving the stepwise translocation of polypeptide chains across the membrane. The polypeptide is Protein translocase subunit SecA (Salmonella paratyphi B (strain ATCC BAA-1250 / SPB7)).